The chain runs to 457 residues: Carboxypeptidase N catalytic chain (457 aa).

The N-terminal stretch at M1–F23 is a signal peptide. In terms of domain architecture, Peptidase M14 spans R24 to V338. C42 and C104 form a disulfide bridge. Positions 86, 89, and 216 each coordinate Zn(2+). C271 and C311 are oxidised to a cystine. Residue E308 is the Proton donor/acceptor of the active site. T400, T402, and T409 each carry an O-linked (GalNAc...) threonine glycan. The tract at residues S418 to A457 is disordered.

The protein belongs to the peptidase M14 family. As to quaternary structure, tetramer of two catalytic chains and two glycosylated inactive chains. Requires Zn(2+) as cofactor. As to expression, mainly expressed in liver. Also detected in lung, stomach, intestine, spleen and kidney.

The protein resides in the secreted. It is found in the extracellular space. The catalysed reaction is Release of a C-terminal basic amino acid, preferentially lysine.. Its function is as follows. Protects the body from potent vasoactive and inflammatory peptides containing C-terminal Arg or Lys (such as kinins or anaphylatoxins) which are released into the circulation. This chain is Carboxypeptidase N catalytic chain (Cpn1), found in Mus musculus (Mouse).